A 142-amino-acid polypeptide reads, in one-letter code: Large ribosomal subunit protein uL11 (142 aa).

Belongs to the universal ribosomal protein uL11 family. In terms of assembly, part of the ribosomal stalk of the 50S ribosomal subunit. Interacts with L10 and the large rRNA to form the base of the stalk. L10 forms an elongated spine to which L12 dimers bind in a sequential fashion forming a multimeric L10(L12)X complex. In terms of processing, one or more lysine residues are methylated.

Forms part of the ribosomal stalk which helps the ribosome interact with GTP-bound translation factors. This Shewanella amazonensis (strain ATCC BAA-1098 / SB2B) protein is Large ribosomal subunit protein uL11.